A 960-amino-acid polypeptide reads, in one-letter code: Protein mono-ADP-ribosyltransferase PARP10 (960 aa).

ADP-ribosyl glutamic acid is present on glutamate 103. Residues 325–341 (SMGSTSPVDPVESSTEL) show a composition bias toward polar residues. A disordered region spans residues 325-346 (SMGSTSPVDPVESSTELPEQVG). A phosphoserine mark is found at serine 381 and serine 388. Positions 553 to 576 (SPHGGEDRVPLEMEKEKPGGPGET) are disordered. Residues 555–570 (HGGEDRVPLEMEKEKP) show a composition bias toward basic and acidic residues. Residues 604–621 (LEEEATLQLAIHRSLESQ) carry the Ubiquitin-interacting motif. Serine 617 is subject to Phosphoserine. The interval 649-856 (DEDTGGEAQL…CAHGFNRSFC (208 aa)) is myc binding. One can recognise a PARP catalytic domain in the interval 755 to 960 (PNLSEQGLKE…TCKNILPGTP (206 aa)). The PIP-box signature appears at 780–787 (QDVVRAFY). Glutamate 831 bears the ADP-ribosyl glutamic acid mark.

The protein belongs to the ARTD/PARP family. In terms of assembly, interacts with MYC. Interacts with PARP14. Interacts (via-PIP box and ubiquitin-interacting motifs) with PCNA. In terms of processing, stimulated through its phosphorylation by CDK2. Acquires CDK-dependent phosphorylation through late-G1 to S phase, and from prometaphase to cytokinesis in the nucleolar organizing regions. Phosphorylation is suppressed in growth-arrested cells. Auto-mono-ADP-ribosylated on glutamate and lysine residues.

The protein localises to the cytoplasm. It is found in the nucleus. The catalysed reaction is L-lysyl-[protein] + NAD(+) = N(6)-(ADP-D-ribosyl)-L-lysyl-[protein] + nicotinamide + H(+). It catalyses the reaction L-aspartyl-[protein] + NAD(+) = 4-O-(ADP-D-ribosyl)-L-aspartyl-[protein] + nicotinamide. It carries out the reaction L-glutamyl-[protein] + NAD(+) = 5-O-(ADP-D-ribosyl)-L-glutamyl-[protein] + nicotinamide. Functionally, ADP-ribosyltransferase that mediates mono-ADP-ribosylation of glutamate and aspartate residues on target proteins. In contrast to PARP1 and PARP2, it is not able to mediate poly-ADP-ribosylation. Catalyzes mono-ADP-ribosylation of GSK3B, leading to negatively regulate GSK3B kinase activity. Involved in translesion DNA synthesis in response to DNA damage via its interaction with PCNA. This is Protein mono-ADP-ribosyltransferase PARP10 from Mus musculus (Mouse).